Here is a 250-residue protein sequence, read N- to C-terminus: Methylthioribulose-1-phosphate dehydratase (250 aa).

Positions 103 and 105 each coordinate Zn(2+).

It belongs to the aldolase class II family. MtnB subfamily. Zn(2+) serves as cofactor.

It carries out the reaction 5-(methylsulfanyl)-D-ribulose 1-phosphate = 5-methylsulfanyl-2,3-dioxopentyl phosphate + H2O. The protein operates within amino-acid biosynthesis; L-methionine biosynthesis via salvage pathway; L-methionine from S-methyl-5-thio-alpha-D-ribose 1-phosphate: step 2/6. Its function is as follows. Catalyzes the dehydration of methylthioribulose-1-phosphate (MTRu-1-P) into 2,3-diketo-5-methylthiopentyl-1-phosphate (DK-MTP-1-P). In Leptospira borgpetersenii serovar Hardjo-bovis (strain JB197), this protein is Methylthioribulose-1-phosphate dehydratase.